We begin with the raw amino-acid sequence, 170 residues long: Protein BofC (170 aa).

The signal sequence occupies residues 1 to 30 (MKRFSTAYLLLGILCSAAVFLIGAPSRALG).

Monomer.

It localises to the forespore intermembrane space. In terms of biological role, inhibits the SpoIVB zymogen from undergoing autocatalytic activation by an unknown mechanism, and in this way plays a role in the sigma-K checkpoint of sporulation. The sequence is that of Protein BofC (bofC) from Bacillus subtilis (strain 168).